We begin with the raw amino-acid sequence, 516 residues long: Protein DML1 (516 aa).

This sequence belongs to the misato family.

It localises to the mitochondrion. Involved in the partitioning of the mitochondrial organelle and mitochondrial DNA (mtDNA) inheritance. The sequence is that of Protein DML1 (DML1) from Coccidioides immitis (strain RS) (Valley fever fungus).